The following is a 935-amino-acid chain: Myocardin (935 aa).

Positions 12–27 (IRRKFRSVLQLRLQQR) match the MEF2C-binding motif. RPEL repeat units lie at residues 18–43 (SVLQ…PPLK), 62–87 (DSLR…QAST), and 106–131 (DDLN…PMDS). A disordered region spans residues 37–73 (GLIPPLKGPTEFHDPRKQLDSAKTEDSLRRKGRNRSD). Residues 46 to 73 (TEFHDPRKQLDSAKTEDSLRRKGRNRSD) show a composition bias toward basic and acidic residues. Positions 153 to 201 (FEDDSSRDGLSPDQARSEDPQGSTGSTPDIKSTEAPLDTIQDLTPGSES) are HDAC5-binding. The tract at residues 155–283 (DDSSRDGLSP…SPPPMDSAYA (129 aa)) is disordered. Polar residues-rich tracts occupy residues 172–182 (PQGSTGSTPDI) and 206–216 (AASQPGNQSDP). The segment covering 244 to 261 (NRHKKPKDPKPKVKKLKY) has biased composition (basic residues). Residues 287–322 (QQQQLFLQLQILSQQQQQQQQQQQQQQQQQQQQQRF) adopt a coiled-coil conformation. The disordered stretch occupies residues 337-378 (EQMARNPNPSSTPLSNTPLSPVKNSISGQTGVSSLKPGPLPP). The segment covering 342 to 357 (NPNPSSTPLSNTPLSP) has biased composition (low complexity). The segment covering 358–369 (VKNSISGQTGVS) has biased composition (polar residues). The SAP domain occupies 380-414 (LDDLKVSELRQQLRIRGLPVSGTKTALVDRLRPFQ). Residues serine 454, serine 458, serine 462, and serine 466 each carry the phosphoserine; by GSK3-beta modification. Positions 498–518 (ESLLSSLNGGSGPSEPDGLDS) are disordered. A coiled-coil region spans residues 519-563 (EKDKMLVEKQKVINQLTWKLRQEQRQVEELRMQLQKQKSSCSDQK). Residues 579–605 (SCPFAPQQASGKGQGHSSDSPPPACET) form a disordered region. A compositionally biased stretch (polar residues) spans 585-597 (QQASGKGQGHSSD). 4 positions are modified to phosphoserine; by GSK3-beta: serine 624, serine 628, serine 632, and serine 636. A disordered region spans residues 654 to 731 (NNHYFLASSS…DAVKQQMTRS (78 aa)). A compositionally biased stretch (polar residues) spans 660 to 691 (ASSSGAQRENHGVSSPSSSQGCAQMTGLQSSD). Over residues 695 to 709 (PTFSIPSPTFSKSSS) the composition is skewed to low complexity. The required for interaction with and ubiquitination by STUB1 stretch occupies residues 714-935 (ITQPPSYEDA…SPMDLHLQQW (222 aa)). Residues serine 812, serine 859, and serine 866 each carry the phosphoserine; by MAPK1 and MAPK3 modification. Position 893 is a phosphothreonine; by MAPK1 and MAPK3 (threonine 893).

In terms of assembly, homodimer. Interacts with MLLT7/FOXO4. Interacts with SRF, its association does not depend on specific DNA sequences for ternary complex formation. Interacts (via C-terminal) with EP300 (via CREB-binding domain). Interacts with HDAC4 and HDAC5. Interacts with MEF2C. Interacts (via C-terminus) with STUB1/CHIP. Interacts with PURB. Ubiquitinated; by STUB1/CHIP at the C-terminus, leading to its degradation by the proteasome. Phosphorylation by GSK3B is required for STUB1/CHIP-mediated ubiquitination. Post-translationally, phosphorylation negatively regulates transcriptional activity. Phosphorylated; by GSK3B. As to expression, expressed in smooth muscle cell-containing tissues. Expressed in the heart. Expressed in the aorta and bladder. Weakly expression in the lung, testis and kidney. Weakly expressed in the stomach. Weakly expressed in the intestine and colon. Expressed in the heart. In terms of tissue distribution, predominantly expressed in cardiac muscle. As to expression, predominantly expressed in smooth muscle cell-rich tissues.

Its subcellular location is the nucleus speckle. Its function is as follows. Smooth muscle cells (SM) and cardiac muscle cells-specific transcriptional factor which uses the canonical single or multiple CArG boxes DNA sequence. Acts as a cofactor of serum response factor (SRF) with the potential to modulate SRF-target genes. Plays a crucial role in cardiogenesis, urinary bladder development, and differentiation of the smooth muscle cell lineage (myogenesis). Positively regulates the transcription of genes involved in vascular smooth muscle contraction. In terms of biological role, positively regulates the activation of smooth muscle cell gene promoter regions. Positively regulates the activation of smooth muscle cell gene promoter regions. Activation of the MYH6 promoter is enhanced in the presence of MEF2C. This is Myocardin (Myocd) from Mus musculus (Mouse).